The following is a 278-amino-acid chain: Undecaprenyl-diphosphatase (278 aa).

A run of 6 helical transmembrane segments spans residues 44 to 64 (FLEM…MTIY), 84 to 104 (WQLW…AVPL), 112 to 132 (FNFM…FIWI), 187 to 207 (SVAA…YSGL), 224 to 244 (VWIL…VIRF), and 254 to 274 (FTVF…YAFI).

This sequence belongs to the UppP family.

It is found in the cell membrane. It catalyses the reaction di-trans,octa-cis-undecaprenyl diphosphate + H2O = di-trans,octa-cis-undecaprenyl phosphate + phosphate + H(+). Functionally, catalyzes the dephosphorylation of undecaprenyl diphosphate (UPP). Confers resistance to bacitracin. The polypeptide is Undecaprenyl-diphosphatase (Streptococcus suis (strain 98HAH33)).